A 346-amino-acid polypeptide reads, in one-letter code: MQADILDGKQKRVNLNSKRLVNCNQVDVNQLVPIKYKWAWEHYLNGCANNWLPTEISMGKDIELWKSNVLSEDERRVILLNLGFFSTAESLVGNNIVLAIFKHVTNPEARQYLLRQAFEEAVHTHTFLYICESLGLDEKEIFNAYNERASIKAKDDFQMEITGKVLDPNFRTDSVEGLQEFIKNLVGYYIIMEGIFFYSGFVMILSFHRQNKMVGIGEQYQYILRDETIHLNFGVDLINGIKEENPEIWTTELQQEIIEMIQRAVDLEIDYARDCLPRGILGLRASMFIDYVQHIADRRLERIGLKPIYHTKNPFPWMSETIDLNKEKNFFETRVTEYQHAASLTW.

Fe cation-binding residues include Glu-89, Glu-120, and His-123. Tyr-129 is a catalytic residue. The Fe cation site is built by Glu-193, Glu-227, and His-230.

Belongs to the ribonucleoside diphosphate reductase small chain family. In terms of assembly, tetramer of two alpha and two beta subunits. Requires Fe cation as cofactor.

It catalyses the reaction a 2'-deoxyribonucleoside 5'-diphosphate + [thioredoxin]-disulfide + H2O = a ribonucleoside 5'-diphosphate + [thioredoxin]-dithiol. In terms of biological role, provides the precursors necessary for DNA synthesis. Catalyzes the biosynthesis of deoxyribonucleotides from the corresponding ribonucleotides. The sequence is that of Ribonucleoside-diphosphate reductase subunit beta (nrdB) from Chlamydia muridarum (strain MoPn / Nigg).